We begin with the raw amino-acid sequence, 498 residues long: Zinc finger protein 395 (498 aa).

Residues 129–165 (QKPLSSPIEQSLPTSPGATSTSAQRSVSRSIDVPKRR) form a disordered region. Residues 130–157 (KPLSSPIEQSLPTSPGATSTSAQRSVSR) show a composition bias toward polar residues. Positions 171-180 (MDEMMAAMVL) match the Nuclear export signal motif. The disordered stretch occupies residues 209-245 (KEGGDVSDSGSSTTSGHWSASSGVSTPSPPHTDASPK). The segment covering 214-231 (VSDSGSSTTSGHWSASSG) has biased composition (low complexity). The segment at 285 to 310 (YKCLWPNCGKLLRSIVGIKRHVKTQH) adopts a C2H2-type zinc-finger fold.

The protein resides in the cytoplasm. It localises to the nucleus. This chain is Zinc finger protein 395 (znf395), found in Xenopus laevis (African clawed frog).